Consider the following 279-residue polypeptide: Urease accessory protein UreD (279 aa).

This sequence belongs to the UreD family. As to quaternary structure, ureD, UreF and UreG form a complex that acts as a GTP-hydrolysis-dependent molecular chaperone, activating the urease apoprotein by helping to assemble the nickel containing metallocenter of UreC. The UreE protein probably delivers the nickel.

The protein resides in the cytoplasm. Its function is as follows. Required for maturation of urease via the functional incorporation of the urease nickel metallocenter. This is Urease accessory protein UreD from Pseudomonas fluorescens (strain Pf0-1).